We begin with the raw amino-acid sequence, 73 residues long: Translational regulator CsrA (73 aa).

This sequence belongs to the CsrA/RsmA family. As to quaternary structure, homodimer; the beta-strands of each monomer intercalate to form a hydrophobic core, while the alpha-helices form wings that extend away from the core.

The protein resides in the cytoplasm. In terms of biological role, a translational regulator that binds mRNA to regulate translation initiation and/or mRNA stability. Usually binds in the 5'-UTR at or near the Shine-Dalgarno sequence preventing ribosome-binding, thus repressing translation. Its main target seems to be the major flagellin gene, while its function is anatagonized by FliW. The chain is Translational regulator CsrA from Clostridium acetobutylicum (strain ATCC 824 / DSM 792 / JCM 1419 / IAM 19013 / LMG 5710 / NBRC 13948 / NRRL B-527 / VKM B-1787 / 2291 / W).